Consider the following 364-residue polypeptide: UDP-N-acetylglucosamine--N-acetylmuramyl-(pentapeptide) pyrophosphoryl-undecaprenol N-acetylglucosamine transferase (364 aa).

Residues 10-12 (TGG), Asn128, Arg170, Ser199, Ile250, and Gln295 each bind UDP-N-acetyl-alpha-D-glucosamine.

Belongs to the glycosyltransferase 28 family. MurG subfamily.

It localises to the cell inner membrane. It catalyses the reaction di-trans,octa-cis-undecaprenyl diphospho-N-acetyl-alpha-D-muramoyl-L-alanyl-D-glutamyl-meso-2,6-diaminopimeloyl-D-alanyl-D-alanine + UDP-N-acetyl-alpha-D-glucosamine = di-trans,octa-cis-undecaprenyl diphospho-[N-acetyl-alpha-D-glucosaminyl-(1-&gt;4)]-N-acetyl-alpha-D-muramoyl-L-alanyl-D-glutamyl-meso-2,6-diaminopimeloyl-D-alanyl-D-alanine + UDP + H(+). Its pathway is cell wall biogenesis; peptidoglycan biosynthesis. Its function is as follows. Cell wall formation. Catalyzes the transfer of a GlcNAc subunit on undecaprenyl-pyrophosphoryl-MurNAc-pentapeptide (lipid intermediate I) to form undecaprenyl-pyrophosphoryl-MurNAc-(pentapeptide)GlcNAc (lipid intermediate II). The sequence is that of UDP-N-acetylglucosamine--N-acetylmuramyl-(pentapeptide) pyrophosphoryl-undecaprenol N-acetylglucosamine transferase from Chlorobaculum parvum (strain DSM 263 / NCIMB 8327) (Chlorobium vibrioforme subsp. thiosulfatophilum).